Consider the following 510-residue polypeptide: Probable inositol 3-phosphate synthase isozyme 3 (510 aa).

Belongs to the myo-inositol 1-phosphate synthase family. NAD(+) is required as a cofactor. As to expression, expressed in siliques, leaves, roots, seed endosperm, but not in embryos. Highest expression in roots. Confined to vascular tissue and hydathodes of leaves.

It is found in the cytoplasm. It carries out the reaction D-glucose 6-phosphate = 1D-myo-inositol 3-phosphate. It participates in polyol metabolism; myo-inositol biosynthesis; myo-inositol from D-glucose 6-phosphate: step 1/2. Key enzyme in myo-inositol biosynthesis pathway that catalyzes the conversion of glucose 6-phosphate to 1-myo-inositol 1-phosphate in a NAD-dependent manner. This is Probable inositol 3-phosphate synthase isozyme 3 (IPS3) from Arabidopsis thaliana (Mouse-ear cress).